The chain runs to 228 residues: Lipoprotein-releasing system ATP-binding protein LolD (228 aa).

In terms of domain architecture, ABC transporter spans 7–228 (LNCQNLTKDY…MQDGVLRPEM (222 aa)). 43 to 50 (GSSGSGKS) lines the ATP pocket.

This sequence belongs to the ABC transporter superfamily. Lipoprotein translocase (TC 3.A.1.125) family. As to quaternary structure, the complex is composed of two ATP-binding proteins (LolD) and two transmembrane proteins (LolC and LolE).

Its subcellular location is the cell inner membrane. Its function is as follows. Part of the ABC transporter complex LolCDE involved in the translocation of mature outer membrane-directed lipoproteins, from the inner membrane to the periplasmic chaperone, LolA. Responsible for the formation of the LolA-lipoprotein complex in an ATP-dependent manner. This chain is Lipoprotein-releasing system ATP-binding protein LolD, found in Mannheimia succiniciproducens (strain KCTC 0769BP / MBEL55E).